The primary structure comprises 619 residues: 1-deoxy-D-xylulose-5-phosphate synthase (619 aa).

Residues H63 and G104 to S106 contribute to the thiamine diphosphate site. Residue D136 participates in Mg(2+) binding. Thiamine diphosphate contacts are provided by residues G137 to S138, N165, Y272, and E353. N165 provides a ligand contact to Mg(2+).

This sequence belongs to the transketolase family. DXPS subfamily. In terms of assembly, homodimer. Requires Mg(2+) as cofactor. It depends on thiamine diphosphate as a cofactor.

It carries out the reaction D-glyceraldehyde 3-phosphate + pyruvate + H(+) = 1-deoxy-D-xylulose 5-phosphate + CO2. Its pathway is metabolic intermediate biosynthesis; 1-deoxy-D-xylulose 5-phosphate biosynthesis; 1-deoxy-D-xylulose 5-phosphate from D-glyceraldehyde 3-phosphate and pyruvate: step 1/1. In terms of biological role, catalyzes the acyloin condensation reaction between C atoms 2 and 3 of pyruvate and glyceraldehyde 3-phosphate to yield 1-deoxy-D-xylulose-5-phosphate (DXP). The protein is 1-deoxy-D-xylulose-5-phosphate synthase of Wolinella succinogenes (strain ATCC 29543 / DSM 1740 / CCUG 13145 / JCM 31913 / LMG 7466 / NCTC 11488 / FDC 602W) (Vibrio succinogenes).